Here is a 126-residue protein sequence, read N- to C-terminus: Large ribosomal subunit protein bL12 (126 aa).

A disordered region spans residues 97-126 (PQPVKSGVSKEEAEEAKKQLAESGAEVEVK). Basic and acidic residues predominate over residues 104 to 116 (VSKEEAEEAKKQL).

It belongs to the bacterial ribosomal protein bL12 family. As to quaternary structure, homodimer. Part of the ribosomal stalk of the 50S ribosomal subunit. Forms a multimeric L10(L12)X complex, where L10 forms an elongated spine to which 2 to 4 L12 dimers bind in a sequential fashion. Binds GTP-bound translation factors.

In terms of biological role, forms part of the ribosomal stalk which helps the ribosome interact with GTP-bound translation factors. Is thus essential for accurate translation. This is Large ribosomal subunit protein bL12 from Geotalea uraniireducens (strain Rf4) (Geobacter uraniireducens).